The chain runs to 181 residues: ATP synthase subunit delta (181 aa).

Belongs to the ATPase delta chain family. As to quaternary structure, F-type ATPases have 2 components, F(1) - the catalytic core - and F(0) - the membrane proton channel. F(1) has five subunits: alpha(3), beta(3), gamma(1), delta(1), epsilon(1). F(0) has three main subunits: a(1), b(2) and c(10-14). The alpha and beta chains form an alternating ring which encloses part of the gamma chain. F(1) is attached to F(0) by a central stalk formed by the gamma and epsilon chains, while a peripheral stalk is formed by the delta and b chains.

It is found in the cell inner membrane. In terms of biological role, f(1)F(0) ATP synthase produces ATP from ADP in the presence of a proton or sodium gradient. F-type ATPases consist of two structural domains, F(1) containing the extramembraneous catalytic core and F(0) containing the membrane proton channel, linked together by a central stalk and a peripheral stalk. During catalysis, ATP synthesis in the catalytic domain of F(1) is coupled via a rotary mechanism of the central stalk subunits to proton translocation. Functionally, this protein is part of the stalk that links CF(0) to CF(1). It either transmits conformational changes from CF(0) to CF(1) or is implicated in proton conduction. The chain is ATP synthase subunit delta from Desulfotalea psychrophila (strain LSv54 / DSM 12343).